A 39-amino-acid chain; its full sequence is Fuctinin-3 (39 aa).

The tract at residues 1–39 (KELNSNHDGADETSEKEQQEAIEHIDEVQNEIDRLNETA) is disordered.

To human SET/PHAPII protein. In terms of assembly, oligomer.

It is found in the cytoplasm. Functionally, has a role in the physiological regulation of fucosylation processes. This is Fuctinin-3 from Rattus norvegicus (Rat).